Consider the following 380-residue polypeptide: Flap endonuclease 1 (380 aa).

Positions 1–104 (MGIKGLSQLI…GELTKRAEKR (104 aa)) are N-domain. A Mg(2+)-binding site is contributed by Asp34. The DNA site is built by Arg47 and Arg70. Mg(2+) is bound by residues Asp86, Glu158, Glu160, Asp179, and Asp181. The interval 122–253 (DIDKFNRRLV…KKAVELINKH (132 aa)) is I-domain. Glu158 lines the DNA pocket. DNA contacts are provided by Gly231 and Asp233. Asp233 contacts Mg(2+). The interaction with PCNA stretch occupies residues 336–344 (TQGRLDSFF). The tract at residues 342–380 (SFFKVLPSTPNPKRKIEDKKTPASKKAKTTGGKPGRKPK) is disordered. Positions 363 to 380 (PASKKAKTTGGKPGRKPK) are enriched in basic residues.

Belongs to the XPG/RAD2 endonuclease family. FEN1 subfamily. In terms of assembly, interacts with PCNA. Three molecules of FEN1 bind to one PCNA trimer with each molecule binding to one PCNA monomer. PCNA stimulates the nuclease activity without altering cleavage specificity. Mg(2+) serves as cofactor. Phosphorylated. Phosphorylation upon DNA damage induces relocalization to the nuclear plasma.

It localises to the nucleus. Its subcellular location is the nucleolus. It is found in the nucleoplasm. The protein resides in the mitochondrion. Structure-specific nuclease with 5'-flap endonuclease and 5'-3' exonuclease activities involved in DNA replication and repair. During DNA replication, cleaves the 5'-overhanging flap structure that is generated by displacement synthesis when DNA polymerase encounters the 5'-end of a downstream Okazaki fragment. It enters the flap from the 5'-end and then tracks to cleave the flap base, leaving a nick for ligation. Also involved in the long patch base excision repair (LP-BER) pathway, by cleaving within the apurinic/apyrimidinic (AP) site-terminated flap. Acts as a genome stabilization factor that prevents flaps from equilibrating into structures that lead to duplications and deletions. Also possesses 5'-3' exonuclease activity on nicked or gapped double-stranded DNA, and exhibits RNase H activity. Also involved in replication and repair of rDNA and in repairing mitochondrial DNA. The protein is Flap endonuclease 1 of Aedes aegypti (Yellowfever mosquito).